The following is a 232-amino-acid chain: Large ribosomal subunit protein uL1 (232 aa).

This sequence belongs to the universal ribosomal protein uL1 family. In terms of assembly, part of the 50S ribosomal subunit.

Functionally, binds directly to 23S rRNA. The L1 stalk is quite mobile in the ribosome, and is involved in E site tRNA release. Protein L1 is also a translational repressor protein, it controls the translation of the L11 operon by binding to its mRNA. This is Large ribosomal subunit protein uL1 from Chlamydia trachomatis serovar D (strain ATCC VR-885 / DSM 19411 / UW-3/Cx).